We begin with the raw amino-acid sequence, 196 residues long: Endoribonuclease YbeY (196 aa).

The Zn(2+) site is built by H120, H124, and H130.

Belongs to the endoribonuclease YbeY family. Requires Zn(2+) as cofactor.

It is found in the cytoplasm. Functionally, single strand-specific metallo-endoribonuclease involved in late-stage 70S ribosome quality control and in maturation of the 3' terminus of the 16S rRNA. The sequence is that of Endoribonuclease YbeY from Corynebacterium glutamicum (strain ATCC 13032 / DSM 20300 / JCM 1318 / BCRC 11384 / CCUG 27702 / LMG 3730 / NBRC 12168 / NCIMB 10025 / NRRL B-2784 / 534).